The following is a 402-amino-acid chain: UDP-N-acetylmuramoylalanine--D-glutamate ligase (402 aa).

97–103 (GTNGKTT) contributes to the ATP binding site.

It belongs to the MurCDEF family.

Its subcellular location is the cytoplasm. It catalyses the reaction UDP-N-acetyl-alpha-D-muramoyl-L-alanine + D-glutamate + ATP = UDP-N-acetyl-alpha-D-muramoyl-L-alanyl-D-glutamate + ADP + phosphate + H(+). It participates in cell wall biogenesis; peptidoglycan biosynthesis. In terms of biological role, cell wall formation. Catalyzes the addition of glutamate to the nucleotide precursor UDP-N-acetylmuramoyl-L-alanine (UMA). In Campylobacter jejuni subsp. jejuni serotype O:23/36 (strain 81-176), this protein is UDP-N-acetylmuramoylalanine--D-glutamate ligase.